The sequence spans 529 residues: Peptide chain release factor 3 (529 aa).

In terms of domain architecture, tr-type G spans 11–280; sequence NKRRTFAIIS…GLVKWAPAPM (270 aa). GTP-binding positions include 20-27, 88-92, and 142-145; these read SHPDAGKT, DTPGH, and NKLD.

It belongs to the TRAFAC class translation factor GTPase superfamily. Classic translation factor GTPase family. PrfC subfamily.

The protein resides in the cytoplasm. Functionally, increases the formation of ribosomal termination complexes and stimulates activities of RF-1 and RF-2. It binds guanine nucleotides and has strong preference for UGA stop codons. It may interact directly with the ribosome. The stimulation of RF-1 and RF-2 is significantly reduced by GTP and GDP, but not by GMP. The sequence is that of Peptide chain release factor 3 from Proteus mirabilis (strain HI4320).